A 306-amino-acid polypeptide reads, in one-letter code: D-alanine--D-alanine ligase (306 aa).

The ATP-grasp domain maps to 104 to 303 (KMLWKAFGLP…FEQLVVKILE (200 aa)). An ATP-binding site is contributed by 134–189 (VAKLGLPLMVKPSLEGSSVGLTKVKAVEELKSAVEYALKFDNTILIEEWLAGDELT). Aspartate 257, glutamate 270, and asparagine 272 together coordinate Mg(2+).

It belongs to the D-alanine--D-alanine ligase family. Mg(2+) is required as a cofactor. Requires Mn(2+) as cofactor.

The protein localises to the cytoplasm. It carries out the reaction 2 D-alanine + ATP = D-alanyl-D-alanine + ADP + phosphate + H(+). The protein operates within cell wall biogenesis; peptidoglycan biosynthesis. Cell wall formation. This Haemophilus influenzae (strain 86-028NP) protein is D-alanine--D-alanine ligase.